The sequence spans 169 residues: Probable glutathione peroxidase 2 (169 aa).

C41 is a catalytic residue.

The protein belongs to the glutathione peroxidase family. In terms of assembly, interacts with DJ1A. In terms of tissue distribution, expressed in leaves, stems, flowers, green siliques and roots.

The protein resides in the cytoplasm. Its subcellular location is the cytosol. It localises to the nucleus. The enzyme catalyses 2 glutathione + H2O2 = glutathione disulfide + 2 H2O. In terms of biological role, may constitute a glutathione peroxidase-like protective system against oxidative stresses. This Arabidopsis thaliana (Mouse-ear cress) protein is Probable glutathione peroxidase 2 (GPX2).